Reading from the N-terminus, the 364-residue chain is SH3 and cysteine-rich domain-containing protein 3 (364 aa).

Disordered stretches follow at residues 1–89 (MTEK…NDKP) and 189–244 (NKER…HKQP). Residues 64 to 78 (YEEEEEEEEEEEEPP) show a composition bias toward acidic residues. A Phorbol-ester/DAG-type zinc finger spans residues 89 to 140 (PHKFKDHFFKKPKFCDVCARMIVLNNKFGLRCKNCKTNIHEHCQSYVEMQRC). A compositionally biased stretch (basic and acidic residues) spans 212–242 (ESARPEEGKPQDGNPEGDKKAEKKTPDDKHK). SH3 domains follow at residues 247 to 306 (QQSH…RVRA) and 307 to 364 (GERV…LEEI).

In terms of assembly, interacts (via SH3 domains) with the calcium channels CACNA1S and CACNA1C. Component of a calcium channel complex with CACNA1S and CACNB1. Component of a calcium channel complex with CACNA1C and CACNB1.

The protein resides in the cytoplasm. It localises to the cell membrane. The protein localises to the sarcolemma. Its subcellular location is the T-tubule. Functionally, required for normal excitation-contraction coupling in skeletal muscle and for normal muscle contraction in response to membrane depolarization. Required for normal Ca(2+) release from the sarcplasmic reticulum, which ultimately leads to muscle contraction. Probably functions via its effects on muscle calcium channels. Increases CACNA1S channel activity, in addition to its role in enhancing the expression of CACNA1S at the cell membrane. Has a redundant role in promoting the expression of the calcium channel CACNA1S at the cell membrane. Slows down the inactivation rate of the calcium channel CACNA1C. This chain is SH3 and cysteine-rich domain-containing protein 3 (STAC3), found in Homo sapiens (Human).